We begin with the raw amino-acid sequence, 37 residues long: Omega-agatoxin-Aa3d (37 aa).

The protein belongs to the neurotoxin 04 (omega-agtx) family. 03 (type II/III omega-agtx) subfamily. Post-translationally, disulfide bonds are present. As to expression, expressed by the venom gland.

The protein resides in the secreted. Its function is as follows. Omega-agatoxins are antagonists of voltage-gated calcium channels. This toxin blocks calcium channels in insect central neurons but not at peripheral neuromuscular junctions. In vertebrates, it is broadly active against all high-threshold Cav1/CACNA1 channels and Cav2.2/CACNA1B channels. The sequence is that of Omega-agatoxin-Aa3d from Agelenopsis aperta (North American funnel-web spider).